A 284-amino-acid chain; its full sequence is Syntaxin-like protein psy1 (284 aa).

Residues Glu23–Asn57 adopt a coiled-coil conformation. A t-SNARE coiled-coil homology domain is found at Leu181–Ala243. A helical; Anchor for type IV membrane protein transmembrane segment spans residues Ile260–Leu280.

Belongs to the syntaxin family.

The protein resides in the cell membrane. Its subcellular location is the prospore membrane. The protein is Syntaxin-like protein psy1 (psy1) of Schizosaccharomyces pombe (strain 972 / ATCC 24843) (Fission yeast).